Here is a 38-residue protein sequence, read N- to C-terminus: Cytochrome b6-f complex subunit 5 (38 aa).

Residues 5–25 (LLLGIVLGLIPVTLAGLFVAA) form a helical membrane-spanning segment.

This sequence belongs to the PetG family. As to quaternary structure, the 4 large subunits of the cytochrome b6-f complex are cytochrome b6, subunit IV (17 kDa polypeptide, PetD), cytochrome f and the Rieske protein, while the 4 small subunits are PetG, PetL, PetM and PetN. The complex functions as a dimer.

The protein localises to the cellular thylakoid membrane. Its function is as follows. Component of the cytochrome b6-f complex, which mediates electron transfer between photosystem II (PSII) and photosystem I (PSI), cyclic electron flow around PSI, and state transitions. PetG is required for either the stability or assembly of the cytochrome b6-f complex. The polypeptide is Cytochrome b6-f complex subunit 5 (Picosynechococcus sp. (strain ATCC 27264 / PCC 7002 / PR-6) (Agmenellum quadruplicatum)).